We begin with the raw amino-acid sequence, 306 residues long: Proline-rich transmembrane protein 1 (306 aa).

The disordered stretch occupies residues 1–142 (MSSEKSGLPD…PPPAPAQTAQ (142 aa)). The Cytoplasmic portion of the chain corresponds to 1–223 (MSSEKSGLPD…LEPRRPPHDY (223 aa)). Positions 15 to 36 (TSPPPYNAPQPPAEPPAPPPQA) are enriched in pro residues. Residues 40–49 (SHHHHHHHYH) are compositionally biased toward basic residues. Composition is skewed to pro residues over residues 87–111 (HAPP…PPDP) and 121–137 (PLPP…PPAP). Residues 224-244 (MPIAVLTTICCFWPTGIIAIF) form a helical membrane-spanning segment. The Extracellular portion of the chain corresponds to 245–275 (KAVQVRTALARGDMVSAEIASREARNFSFIS). Positions 276 to 296 (LAVGIAAMVLCTILTVVIIIA) form an intramembrane region, helical. At 297–306 (AQHHENYWDP) the chain is on the extracellular side.

This sequence belongs to the CD225/Dispanin family. Component of the outer core of AMPAR complex. AMPAR complex consists of an inner core made of 4 pore-forming GluA/GRIA proteins (GRIA1, GRIA2, GRIA3 and GRIA4) and 4 major auxiliary subunits arranged in a twofold symmetry. One of the two pairs of distinct binding sites is occupied either by CNIH2, CNIH3 or CACNG2, CACNG3. The other harbors CACNG2, CACNG3, CACNG4, CACNG8 or GSG1L. This inner core of AMPAR complex is complemented by outer core constituents binding directly to the GluA/GRIA proteins at sites distinct from the interaction sites of the inner core constituents. Outer core constituents include at least PRRT1, PRRT2, CKAMP44/SHISA9, FRRS1L and NRN1. The proteins of the inner and outer core serve as a platform for other, more peripherally associated AMPAR constituents. Alone or in combination, these auxiliary subunits control the gating and pharmacology of the AMPAR complex and profoundly impact their biogenesis and protein processing.

Its subcellular location is the cell membrane. The protein resides in the synapse. Functionally, required to maintain a pool of extrasynaptic AMPA-regulated glutamate receptors (AMPAR) which is necessary for synapse development and function. Regulates basal AMPAR function and synaptic transmission during development but is dispensable at mature hippocampal synapses. Plays a role in regulating basal phosphorylation levels of glutamate receptor GRIA1 and promotes GRIA1 and GRIA2 cell surface expression. The chain is Proline-rich transmembrane protein 1 from Homo sapiens (Human).